We begin with the raw amino-acid sequence, 161 residues long: Small ribosomal subunit protein uS15 (161 aa).

Positions 1–13 (MAGKRRKKGRSHS) are enriched in basic residues. Positions 1–22 (MAGKRRKKGRSHSTRPATPTVP) are disordered.

It belongs to the universal ribosomal protein uS15 family. As to quaternary structure, part of the 30S ribosomal subunit.

This Hyperthermus butylicus (strain DSM 5456 / JCM 9403 / PLM1-5) protein is Small ribosomal subunit protein uS15.